The chain runs to 308 residues: Maspardin (308 aa).

An AB hydrolase-1 domain is found at 87–159 (FCDGFRKLLD…NSFWLMPAFM (73 aa)). Position 304 is a phosphoserine (S304).

Belongs to the AB hydrolase superfamily. Interacts with CD4. Interacts with ALDH16A1.

Its subcellular location is the cytoplasm. May play a role as a negative regulatory factor in CD4-dependent T-cell activation. This chain is Maspardin (SPG21), found in Pongo abelii (Sumatran orangutan).